A 700-amino-acid polypeptide reads, in one-letter code: MSARRNFEWPELLTADGRGIAFGGDYNPDQWSEDIWDDDIRLMKQAGVNTVALAIFSWDRIQPTEDRWDFGWLDRIIDKLGNAGIVVDLASATATAPLWLYESHPEVLPRDKYGHPVNAGSRQSWSPTSPVFKEYALTLCRKLAERYGTNPYVTAWHMGNEYGWNNREDYSDNALEAFRAWCRRKYGTIDALNQAWGTTFWGQEMNGFDEVLIPRFMGADSMVNPGQKLDFERFGNDMLLDFYKAERDAIAEICPDKPFTTNFMVSTDQCCMDYAAWAKEVNFVSNDHYFHEGESHLDELACSDALMDSLALGKPWYVMEHSTSAVQWKPLNTRKRKGETVRDSLAHVAMGADAINFFQWRASAFGAEAFHSAMVPHAGEDTKLFRQVCELGASLHTLADAGVQGTELAHSDTAILFSAESEWATRSQTLPSMKLNHWHDVRDWYRAFLDAGSRADIVPLAYDWSSYKTVVLPTVLILSAADTQRLADFAAAGGRVVVGYATGLIDEHFHTWLGGYPGAGDGLLRSMLGVRGEEFNILGAEAEGEPGEIRLSSADDSAALDGTTTRLWQNDVNVTGEHAQVLATYAGEEADEWELDGTAAVTRNPYGSGEAYFVGCDLDVADLTKLVRAYLAASSQENADVLHTVRASADATFDFYLPRGKKTVELQGIEGEPVILFQTDREEKPGSYTVRRNGVLVVRR.

R122 and N160 together coordinate substrate. The active-site Proton donor is E161. The active-site Nucleophile is the E320. Substrate-binding positions include W328 and E368 to H371.

This sequence belongs to the glycosyl hydrolase 42 family. Trimer. Tetramer. In terms of processing, the N-terminus is blocked.

The catalysed reaction is Hydrolysis of terminal non-reducing beta-D-galactose residues in beta-D-galactosides.. With respect to regulation, inhibited by high substrate concentrations (100 mg/ml). No effect on activity with various EDTA concentrations (0-1 mM). 20-fold higher activity when cells grown on TOS than when cells grown on galactose, glucose and lactose. In terms of biological role, involved in the hydrolysis of transgalactooligosaccharides (TOS). Highly active towards Gal(beta1-4)Gal and Gal(beta1-4)-Gal-containing oligosaccharides. Low activity towards Gal(beta1-3)Gal, lactose and Gal(beta1-3)GalOMe. No activity towards Gal(beta1-6)Gal, Gal(beta1-4)Man, Gal(alpha1-4)Gal, Gal(alpha1-3)Gal(beta1-4)Gal, lactulose, 3'fucosyllactose, lacto-N-fucopentaose I, lacto-N-fucopentaose II, cellobiose, maltose or sucrose. No transglycosylation activity is found at high substrate concentrations (100 mg/ml) and only low transglycosylation activity at lower substrate concentrations (10 mg/ml). In Bifidobacterium adolescentis (strain ATCC 15703 / DSM 20083 / NCTC 11814 / E194a), this protein is Beta-galactosidase BgaB (bgaB).